A 145-amino-acid polypeptide reads, in one-letter code: SsrA-binding protein (145 aa).

It belongs to the SmpB family.

It is found in the cytoplasm. Required for rescue of stalled ribosomes mediated by trans-translation. Binds to transfer-messenger RNA (tmRNA), required for stable association of tmRNA with ribosomes. tmRNA and SmpB together mimic tRNA shape, replacing the anticodon stem-loop with SmpB. tmRNA is encoded by the ssrA gene; the 2 termini fold to resemble tRNA(Ala) and it encodes a 'tag peptide', a short internal open reading frame. During trans-translation Ala-aminoacylated tmRNA acts like a tRNA, entering the A-site of stalled ribosomes, displacing the stalled mRNA. The ribosome then switches to translate the ORF on the tmRNA; the nascent peptide is terminated with the 'tag peptide' encoded by the tmRNA and targeted for degradation. The ribosome is freed to recommence translation, which seems to be the essential function of trans-translation. In Mycoplasma genitalium (strain ATCC 33530 / DSM 19775 / NCTC 10195 / G37) (Mycoplasmoides genitalium), this protein is SsrA-binding protein.